The sequence spans 387 residues: 3-dehydroquinate synthase (387 aa).

It belongs to the archaeal-type DHQ synthase family.

It catalyses the reaction 2-amino-2,3,7-trideoxy-D-lyxo-hept-6-ulosonate + NAD(+) + H2O = 3-dehydroquinate + NH4(+) + NADH + H(+). Catalyzes the oxidative deamination and cyclization of 2-amino-3,7-dideoxy-D-threo-hept-6-ulosonic acid (ADH) to yield 3-dehydroquinate (DHQ), which is fed into the canonical shikimic pathway of aromatic amino acid biosynthesis. The polypeptide is 3-dehydroquinate synthase (Halobacterium salinarum (strain ATCC 29341 / DSM 671 / R1)).